The following is a 379-amino-acid chain: Alanine racemase (379 aa).

Catalysis depends on lysine 37, which acts as the Proton acceptor; specific for D-alanine. Lysine 37 carries the N6-(pyridoxal phosphate)lysine modification. Arginine 137 serves as a coordination point for substrate. Residue tyrosine 269 is the Proton acceptor; specific for L-alanine of the active site. Methionine 317 contacts substrate.

Belongs to the alanine racemase family. It depends on pyridoxal 5'-phosphate as a cofactor.

The catalysed reaction is L-alanine = D-alanine. It participates in amino-acid biosynthesis; D-alanine biosynthesis; D-alanine from L-alanine: step 1/1. Functionally, catalyzes the interconversion of L-alanine and D-alanine. May also act on other amino acids. This Citrifermentans bemidjiense (strain ATCC BAA-1014 / DSM 16622 / JCM 12645 / Bem) (Geobacter bemidjiensis) protein is Alanine racemase (alr).